We begin with the raw amino-acid sequence, 941 residues long: Heat shock protein 70 homolog (941 aa).

The disordered stretch occupies residues 851–887; sequence ENQPDIPEDSEDSESEDDTTTSKDSESSEITENLALP. Positions 856 to 869 are enriched in acidic residues; it reads IPEDSEDSESEDDT.

This sequence belongs to the heat shock protein 70 family.

Its function is as follows. Probable chaperone. The polypeptide is Heat shock protein 70 homolog (Acanthamoeba polyphaga (Amoeba)).